A 920-amino-acid polypeptide reads, in one-letter code: KIN14B-interacting protein At4g14310 (920 aa).

Basic residues predominate over residues 1–10; that stretch reads MSASTNRRRL. Disordered stretches follow at residues 1–199 and 309–375; these read MSAS…EKST and IDGP…EKPS. Residues 35 to 54 show a composition bias toward polar residues; the sequence is PISSKNSNPALQKSLSSKEN. The span at 90–105 shows a compositional bias: low complexity; the sequence is TRSTSSGLRGRSSSPS. Residues 112–135 show a composition bias toward basic and acidic residues; it reads SDLRKRNESRVIGEKGESGQDKKS. 2 stretches are compositionally biased toward polar residues: residues 137-147 and 166-184; these read LKSSGFKQGTS and CPVNSSKFEGSSVARNSIS. The segment covering 327 to 337 has biased composition (basic and acidic residues); sequence LNKEELEDRLL. The span at 345 to 355 shows a compositional bias: polar residues; it reads SRTQSKTSSHV. Residues 357 to 374 show a composition bias toward basic and acidic residues; the sequence is KGHDSVESNKAVNAEEKP. Residues 435 to 463 are a coiled coil; the sequence is TEILRANEALEEIDDEENREEMELEEIDD.

In terms of assembly, interacts with KIN14B, CDKA-1, CKS1 and CKS2.

The protein localises to the cytoplasm. In terms of biological role, might be involved in division plane determination. The sequence is that of KIN14B-interacting protein At4g14310 from Arabidopsis thaliana (Mouse-ear cress).